Consider the following 103-residue polypeptide: UPF0235 protein Rleg2_3707 (103 aa).

It belongs to the UPF0235 family.

The protein is UPF0235 protein Rleg2_3707 of Rhizobium leguminosarum bv. trifolii (strain WSM2304).